The sequence spans 254 residues: HLA class II histocompatibility antigen, DR alpha chain (254 aa).

Residues 1-25 form the signal peptide; that stretch reads MAISGVPVLGFFIIAVLMSAQESWA. The alpha-1 stretch occupies residues 26–109; the sequence is IKEEHVIIQA…KRSNYTPITN (84 aa). The Extracellular portion of the chain corresponds to 26 to 216; that stretch reads IKEEHVIIQA…APSPLPETTE (191 aa). N-linked (GlcNAc...) asparagine glycosylation is found at Asn-103 and Asn-143. Positions 110–203 are alpha-2; sequence VPPEVTVLTN…GLDEPLLKHW (94 aa). Positions 112–204 constitute an Ig-like C1-type domain; sequence PEVTVLTNSP…LDEPLLKHWE (93 aa). A disulfide bridge connects residues Cys-132 and Cys-188. The interval 204–216 is connecting peptide; the sequence is EFDAPSPLPETTE. Residues 217–239 form a helical membrane-spanning segment; the sequence is NVVCALGLTVGLVGIIIGTIFII. Residues 240 to 254 lie on the Cytoplasmic side of the membrane; it reads KGLRKSNAAERRGPL. Lys-244 is covalently cross-linked (Glycyl lysine isopeptide (Lys-Gly) (interchain with G-Cter in ubiquitin)).

This sequence belongs to the MHC class II family. In terms of assembly, heterotrimer that consists of an alpha chain HLA-DRA, a beta chain HLA-DRB and a peptide (peptide-MHCII). Newly synthesized alpha and beta chains forms a heterodimer (MHCII) that associates with the CD74/invariant chain (Ii) in the endoplasmic reticulum (ER). Ii is a trimer composed of three subunits and each subunit interacts with one MHCII dimer, blocking the peptide-binding cleft. As a result, MHCII molecules cannot bind peptides present in the ER. The complex of MHCII and CD74/Ii is transported in vesicles from ER to Golgi to lysosomes, where it encounters antigenic peptides generated via proteolysis of endocytosed antigens. MHCII dimers are dissociated from CD74/Ii by the combined action of proteolysis and HLA-DM. Lysosomal enzymes such as cathepsin, degrade CD74/Ii leaving a 24 amino acid remnant called class II-associated Ii or CLIP. Interacts (via the peptide binding cleft) with CLIP; this interaction inhibits antigen peptide binding before entry in the endosomal compartment. The displacement of CLIP and replacement by a high affinity peptide in lysosomes is performed by HLA-DM heterodimer. HLA-DM catalyzes CLIP dissociation from MHCII, stabilizes empty MHCII and mediates the selection of high affinity peptides. Interacts with HLA-DM heterodimer; this interaction is direct. Interacts (via alpha-1 domain) with TCR (via CDRs). Interacts (via alpha-2 domain) with CD4 (via Ig-like V-type domain); this interaction increases the affinity of TCR for peptide-MHCII. (Microbial infection) Interacts with Epstein-Barr virus BZLF2/gp42. As to quaternary structure, (Microbial infection) Interacts with Staphylococcus aureus enterotoxin A/entA, enterotoxin B/entB, enterotoxin C1/entC1, enterotoxin D/entD, and enterotoxin H/entH. Post-translationally, ubiquitinated by MARCHF1 or MARCHF8 at Lys-244 leading to down-regulation of MHCII. When associated with ubiquitination of the beta chain at 'Lys-254', the down-regulation of MHCII may be highly effective. Expressed in professional APCs: macrophages, dendritic cells and B cells (at protein level). Expressed in thymic epithelial cells (at protein level).

It is found in the cell membrane. Its subcellular location is the endoplasmic reticulum membrane. The protein resides in the early endosome membrane. The protein localises to the late endosome membrane. It localises to the lysosome membrane. It is found in the autolysosome membrane. Its function is as follows. An alpha chain of antigen-presenting major histocompatibility complex class II (MHCII) molecule. In complex with the beta chain HLA-DRB, displays antigenic peptides on professional antigen presenting cells (APCs) for recognition by alpha-beta T cell receptor (TCR) on HLA-DR-restricted CD4-positive T cells. This guides antigen-specific T-helper effector functions, both antibody-mediated immune response and macrophage activation, to ultimately eliminate the infectious agents and transformed cells. Typically presents extracellular peptide antigens of 10 to 30 amino acids that arise from proteolysis of endocytosed antigens in lysosomes. In the tumor microenvironment, presents antigenic peptides that are primarily generated in tumor-resident APCs likely via phagocytosis of apoptotic tumor cells or macropinocytosis of secreted tumor proteins. Presents peptides derived from intracellular proteins that are trapped in autolysosomes after macroautophagy, a mechanism especially relevant for T cell selection in the thymus and central immune tolerance. The selection of the immunodominant epitopes follows two processing modes: 'bind first, cut/trim later' for pathogen-derived antigenic peptides and 'cut first, bind later' for autoantigens/self-peptides. The anchor residue at position 1 of the peptide N-terminus, usually a large hydrophobic residue, is essential for high affinity interaction with MHCII molecules. The chain is HLA class II histocompatibility antigen, DR alpha chain (HLA-DRA) from Homo sapiens (Human).